Here is a 212-residue protein sequence, read N- to C-terminus: GrpE protein homolog, mitochondrial (212 aa).

It belongs to the GrpE family. In terms of assembly, component of the PAM complex, at least composed of mtHsp70, MGE1, TIM44, PAM16, PAM17 and PAM18.

It localises to the mitochondrion matrix. In terms of biological role, essential component of the PAM complex, a complex required for the translocation of transit peptide-containing proteins from the inner membrane into the mitochondrial matrix in an ATP-dependent manner. Seems to control the nucleotide-dependent binding of SSC1 to substrate proteins. This chain is GrpE protein homolog, mitochondrial (mge1), found in Eremothecium gossypii (strain ATCC 10895 / CBS 109.51 / FGSC 9923 / NRRL Y-1056) (Yeast).